Reading from the N-terminus, the 246-residue chain is MSDSSSSSENAPATPESPGRPPRGIKSYVLRAGRMTAAQSRGLEEVWPRLGLSVAEGRQSLEALFGRRAPCVVEVGFGMGQSLVEQAAANPETDFIGIEVHAPGVGKLLDEADKRGLTNLRVYRDDALEVLDKCLPESSLTGLQLFFPDPWPKKKHHKRRIVQPAFVELVRTRLAPHGYLHMATDWEAYAEHMVEVMEEAPGYRNTAPPESAPYVPRPEFRPLTKFESRGERLGHGVWDLIYARVE.

The interval 1 to 26 (MSDSSSSSENAPATPESPGRPPRGIK) is disordered. Glu74, Glu99, Asp126, and Asp149 together coordinate S-adenosyl-L-methionine. The active site involves Asp149. Substrate is bound by residues Lys153, Asp185, and 224–227 (TKFE).

Belongs to the class I-like SAM-binding methyltransferase superfamily. TrmB family.

The enzyme catalyses guanosine(46) in tRNA + S-adenosyl-L-methionine = N(7)-methylguanosine(46) in tRNA + S-adenosyl-L-homocysteine. Its pathway is tRNA modification; N(7)-methylguanine-tRNA biosynthesis. Catalyzes the formation of N(7)-methylguanine at position 46 (m7G46) in tRNA. The protein is tRNA (guanine-N(7)-)-methyltransferase of Chromohalobacter salexigens (strain ATCC BAA-138 / DSM 3043 / CIP 106854 / NCIMB 13768 / 1H11).